A 264-amino-acid polypeptide reads, in one-letter code: Myozenin-2 (264 aa).

Arg53 is modified (omega-N-methylarginine). Positions 90–135 (GRVDGSNLEGGSQQGPSTPPNTPDPRSPPNPENIAPGYSGPLKEIP) are disordered. Ser101 carries the phosphoserine modification. Residues 106-120 (STPPNTPDPRSPPNP) are compositionally biased toward pro residues. Residues Thr107 and Thr111 each carry the phosphothreonine modification. Residue Ser116 is modified to Phosphoserine.

This sequence belongs to the myozenin family. As to quaternary structure, interacts via its C-terminus with spectrin repeats 3 and 4 of ACTN2. Interacts with ACTN1, LDB3, MYOT and PPP3CA. In terms of tissue distribution, expressed specifically in heart and skeletal muscle. In skeletal muscle, localized to the soleus and plantaris muscles, which are predominantly composed of slow-twitch fibers.

The protein resides in the cytoplasm. Its subcellular location is the myofibril. The protein localises to the sarcomere. It localises to the z line. In terms of biological role, myozenins may serve as intracellular binding proteins involved in linking Z line proteins such as alpha-actinin, gamma-filamin, TCAP/telethonin, LDB3/ZASP and localizing calcineurin signaling to the sarcomere. Plays an important role in the modulation of calcineurin signaling. May play a role in myofibrillogenesis. This chain is Myozenin-2, found in Mus musculus (Mouse).